The following is a 152-amino-acid chain: Urease accessory protein UreE (152 aa).

The protein belongs to the UreE family.

It is found in the cytoplasm. In terms of biological role, involved in urease metallocenter assembly. Binds nickel. Probably functions as a nickel donor during metallocenter assembly. The polypeptide is Urease accessory protein UreE (Psychromonas ingrahamii (strain DSM 17664 / CCUG 51855 / 37)).